The primary structure comprises 377 residues: Guanine nucleotide-binding protein subunit alpha-13 (377 aa).

S-palmitoyl cysteine attachment occurs at residues Cys14 and Cys18. The 331-residue stretch at 47 to 377 folds into the G-alpha domain; sequence RLVKILLLGA…HDNLKQLMLQ (331 aa). The tract at residues 50-63 is G1 motif; sequence KILLLGAGESGKST. GTP contacts are provided by residues 58-63, Ser173, and 197-200; these read ESGKST and LLAR. Residue Ser62 coordinates Mg(2+). Residues 195-203 are G2 motif; that stretch reads DILLARRPT. A Mg(2+)-binding site is contributed by Thr203. Position 203 is a phosphothreonine; by PKA (Thr203). Residues 218–227 form a G3 motif region; sequence FKMVDVGGQR. The tract at residues 287-294 is G4 motif; that stretch reads ILFLNKTD. Residues 291–294 and Ala349 contribute to the GTP site; that span reads NKTD. Residues 347–352 are G5 motif; that stretch reads TTAINT.

The protein belongs to the G-alpha family. G(12) subfamily. As to quaternary structure, g proteins are composed of 3 units; alpha, beta and gamma. The alpha chain contains the guanine nucleotide binding site. Interacts with UBXD5. Interacts with HAX1. Interacts (in GTP-bound form) with PPP5C (via TPR repeats); activates PPP5C phosphatase activity and translocates PPP5C to the cell membrane. Interacts with RGS22. Interacts with ARHGEF1. Interacts (in GTP-bound form) with ARHGEF11 (via RGS domain). Interacts (in GTP-bound form) with ARHGEF12 (via RGS domain). Interacts (in GTP-bound form) with CTNND1. Interacts with GAS2L2. Interacts with GPR35. Interacts with GPR174. Post-translationally, palmitoylation is critical for proper membrane localization and signaling. Phosphorylation on Thr-203 by PKA destabilizes the heterotrimer of alpha, beta and gamma, and inhibits Rho activation.

The protein resides in the membrane. It localises to the melanosome. The protein localises to the cytoplasm. It is found in the nucleus. Its function is as follows. Guanine nucleotide-binding proteins (G proteins) are involved as modulators or transducers in various transmembrane signaling systems. Activates effector molecule RhoA by binding and activating RhoGEFs (ARHGEF1/p115RhoGEF, ARHGEF11/PDZ-RhoGEF and ARHGEF12/LARG). GNA13-dependent Rho signaling subsequently regulates transcription factor AP-1 (activating protein-1). Promotes tumor cell invasion and metastasis by activating RhoA/ROCK signaling pathway. Inhibits CDH1-mediated cell adhesion in process independent from Rho activation. In lymphoid follicles, transmits P2RY8- and S1PR2-dependent signals that lead to inhibition of germinal center (GC) B cell growth and migration outside the GC niche. The sequence is that of Guanine nucleotide-binding protein subunit alpha-13 (Gna13) from Rattus norvegicus (Rat).